The sequence spans 270 residues: SAMP-activating enzyme E1 (270 aa).

ATP-binding positions include Gly-42, Asp-63, 70-74 (SNLQR), and Lys-87. Lys-113 is covalently cross-linked (Glycyl lysine isopeptide (Lys-Gly) (interchain with G-Cter in SAMP2)). 131–132 (DN) is a binding site for ATP. The Zn(2+) site is built by Cys-171 and Cys-174. Cys-188 functions as the Glycyl thioester intermediate in the catalytic mechanism. Cys-245 and Cys-248 together coordinate Zn(2+).

This sequence belongs to the HesA/MoeB/ThiF family. In terms of assembly, interacts with NcsA. Zn(2+) serves as cofactor. Sampylated at Lys-113 with the archaeal ubiquitin-like protein SAMP2. Also sampylated with SAMP1.

The catalysed reaction is [small archaeal modifier protein]-C-terminal Gly-Gly + ATP + H(+) = [small archaeal modifier protein]-C-terminal Gly-Gly-AMP + diphosphate. Functionally, likely activates multiple ubiquitin-like SAMPs for protein conjugation as well as for sulfur transfer, via ATP-dependent adenylation at their C-terminus. In fact, it is required for the formation of all three SAMP1-, SAMP2- and SAMP3-protein conjugates, and for molybdenum cofactor (MoCo) biosynthesis and thiolation of tRNAs. This is SAMP-activating enzyme E1 (ubaA) from Haloferax volcanii (strain ATCC 29605 / DSM 3757 / JCM 8879 / NBRC 14742 / NCIMB 2012 / VKM B-1768 / DS2) (Halobacterium volcanii).